A 715-amino-acid polypeptide reads, in one-letter code: MSMFNKVVKEFQWGQHKVRLETGEVARQASGAVIVDVEDTVVLATVVGAKSAKPGQDFFPLTVDYLEKTYSAGKIPGGFFRREGRPSEHETLTSRLIDRPLRPLFPEGFYNEVQVVIHVLSVNPEIPADIPALIGASAALAVSGLPFNGPVGAARVAYIDNAYVLNPTRDQIKASSLDLVVAGTERAVLMVESEADQLSEDVMLGAVVFGHEQMQVAIDAIHELVREGGKPEWDWQPAPKNEPLIARVTELAQNDLLAAYQLRDKQARSTKLKEVYAATSAKLEEDASAAGTVAADKATVGNVLFDIEAKIVRSQILNGEPRIDGRDTRTVRPIEIRTGVLPRTHGSALFTRGETQALVVATLGTKGDEQIIDALEGEYRERFMLHYNMPPFATGETGRVGSPKRREIGHGRLAKRALVKCLPSADEFGYSIRVVSEITESNGSSSMASVCGGCLALMDAGVPMKAHVAGIAMGLILEGNKFAVLTDILGDEDHLGDMDFKVAGTEQGVTALQMDIKIQGITKEIMQVALAQAKEGRMHILGKMTSAVSGANTQLSEFAPRMITIKINPEKIRDVIGKGGSVIRALTEETGTTIDISDDGVVTIASTNSDGMAEAKKRIENITAEIEVGQVYEGTVLKLLDFGAIVNLLPGKDGLLHISEIVNERVKDINDYLKEGQQVKVKVIQTDEKGRVRLSAKALLNEAAAASQSDTPPQQ.

Positions 493 and 499 each coordinate Mg(2+). The region spanning 560–619 is the KH domain; it reads PRMITIKINPEKIRDVIGKGGSVIRALTEETGTTIDISDDGVVTIASTNSDGMAEAKKRI. An S1 motif domain is found at 629–697; the sequence is GQVYEGTVLK…EKGRVRLSAK (69 aa).

This sequence belongs to the polyribonucleotide nucleotidyltransferase family. It depends on Mg(2+) as a cofactor.

The protein localises to the cytoplasm. The catalysed reaction is RNA(n+1) + phosphate = RNA(n) + a ribonucleoside 5'-diphosphate. Functionally, involved in mRNA degradation. Catalyzes the phosphorolysis of single-stranded polyribonucleotides processively in the 3'- to 5'-direction. This chain is Polyribonucleotide nucleotidyltransferase, found in Burkholderia lata (strain ATCC 17760 / DSM 23089 / LMG 22485 / NCIMB 9086 / R18194 / 383).